The chain runs to 457 residues: Multidrug resistance protein MdtK (457 aa).

The Cytoplasmic segment spans residues 1-10 (MQKYISEARL). The helical transmembrane segment at 11–31 (LLALAIPVILAQIAQTAMGFV) threads the bilayer. Residues 32 to 52 (DTVMAGGYSATDMAAVAIGTS) lie on the Periplasmic side of the membrane. A helical membrane pass occupies residues 53 to 73 (IWLPAILFGHGLLLALTPVIA). The Cytoplasmic portion of the chain corresponds to 74–92 (QLNGSGRRERIAHQVRQGF). A helical transmembrane segment spans residues 93–113 (WLAGFVSVLIMLVLWNAGYII). At 114–126 (RSMENIDPALADK) the chain is on the periplasmic side. The chain crosses the membrane as a helical span at residues 127–147 (AVGYLRALLWGAPGYLFFQVA). Topologically, residues 148-159 (RNQCEGLAKTKP) are cytoplasmic. The chain crosses the membrane as a helical span at residues 160–180 (GMVMGFIGLLVNIPVNYIFIY). At 181–188 (GHFGMPEL) the chain is on the periplasmic side. A helical membrane pass occupies residues 189–209 (GGVGCGVATAAVYWVMFLAMV). Residues 210-242 (SYIKRARSMRDIRNEKGTAKPDPAVMKRLIQLG) are Cytoplasmic-facing. A helical transmembrane segment spans residues 243–263 (LPIALALFFEVTLFAVVALLV). Over 264 to 275 (SPLGIVDVAGHQ) the chain is Periplasmic. Residues 276–296 (IALNFSSLMFVLPMSLAAAVT) form a helical membrane-spanning segment. The Cytoplasmic portion of the chain corresponds to 297 to 313 (IRVGYRLGQGSTLDAQT). A helical membrane pass occupies residues 314-334 (AARTGLMVGVCMATLTAIFTV). Residues 335 to 349 (SLREQIALLYNDNPE) lie on the Periplasmic side of the membrane. The chain crosses the membrane as a helical span at residues 350 to 370 (VVTLAAHLMLLAAVYQISDSI). The Cytoplasmic segment spans residues 371–386 (QVIGSGILRGYKDTRS). Residues 387–407 (IFYITFTAYWVLGLPSGYILA) form a helical membrane-spanning segment. Residues 408–417 (LTDLVVEPMG) lie on the Periplasmic side of the membrane. A helical transmembrane segment spans residues 418–438 (PAGFWIGFIIGLTSAAIMMML). Topologically, residues 439–457 (RMRFLQRMPSAIILQRASR) are cytoplasmic.

The protein belongs to the multi antimicrobial extrusion (MATE) (TC 2.A.66.1) family. MdtK subfamily.

It localises to the cell inner membrane. Multidrug efflux pump that functions probably as a Na(+)/drug antiporter. The chain is Multidrug resistance protein MdtK from Shigella boydii serotype 4 (strain Sb227).